The chain runs to 277 residues: Pantothenate synthetase (277 aa).

Position 26 to 33 (methionine 26 to histidine 33) interacts with ATP. The Proton donor role is filled by histidine 33. (R)-pantoate is bound at residue glutamine 57. Glutamine 57 contributes to the beta-alanine binding site. Glycine 143–aspartate 146 is an ATP binding site. Residue glutamine 149 participates in (R)-pantoate binding. ATP-binding positions include valine 172 and leucine 180–arginine 183.

Belongs to the pantothenate synthetase family. In terms of assembly, homodimer.

It is found in the cytoplasm. It catalyses the reaction (R)-pantoate + beta-alanine + ATP = (R)-pantothenate + AMP + diphosphate + H(+). It functions in the pathway cofactor biosynthesis; (R)-pantothenate biosynthesis; (R)-pantothenate from (R)-pantoate and beta-alanine: step 1/1. In terms of biological role, catalyzes the condensation of pantoate with beta-alanine in an ATP-dependent reaction via a pantoyl-adenylate intermediate. This chain is Pantothenate synthetase, found in Chloroflexus aggregans (strain MD-66 / DSM 9485).